The primary structure comprises 130 residues: Phosphoribosyl-ATP pyrophosphatase (130 aa).

This sequence belongs to the PRA-PH family.

It is found in the cytoplasm. The enzyme catalyses 1-(5-phospho-beta-D-ribosyl)-ATP + H2O = 1-(5-phospho-beta-D-ribosyl)-5'-AMP + diphosphate + H(+). Its pathway is amino-acid biosynthesis; L-histidine biosynthesis; L-histidine from 5-phospho-alpha-D-ribose 1-diphosphate: step 2/9. The sequence is that of Phosphoribosyl-ATP pyrophosphatase from Albidiferax ferrireducens (strain ATCC BAA-621 / DSM 15236 / T118) (Rhodoferax ferrireducens).